Here is a 400-residue protein sequence, read N- to C-terminus: DNA primase small subunit PriS (400 aa).

Residues Asp98, Asp100, and Asp306 contribute to the active site.

Belongs to the eukaryotic-type primase small subunit family. As to quaternary structure, heterodimer of a small subunit (PriS) and a large subunit (PriL). It depends on Mg(2+) as a cofactor. Requires Mn(2+) as cofactor.

Catalytic subunit of DNA primase, an RNA polymerase that catalyzes the synthesis of short RNA molecules used as primers for DNA polymerase during DNA replication. The small subunit contains the primase catalytic core and has DNA synthesis activity on its own. Binding to the large subunit stabilizes and modulates the activity, increasing the rate of DNA synthesis while decreasing the length of the DNA fragments, and conferring RNA synthesis capability. The DNA polymerase activity may enable DNA primase to also catalyze primer extension after primer synthesis. May also play a role in DNA repair. This chain is DNA primase small subunit PriS, found in Methanocella arvoryzae (strain DSM 22066 / NBRC 105507 / MRE50).